A 317-amino-acid polypeptide reads, in one-letter code: Methionyl-tRNA formyltransferase (317 aa).

117–120 serves as a coordination point for (6S)-5,6,7,8-tetrahydrofolate; it reads SLLP.

It belongs to the Fmt family.

The enzyme catalyses L-methionyl-tRNA(fMet) + (6R)-10-formyltetrahydrofolate = N-formyl-L-methionyl-tRNA(fMet) + (6S)-5,6,7,8-tetrahydrofolate + H(+). In terms of biological role, attaches a formyl group to the free amino group of methionyl-tRNA(fMet). The formyl group appears to play a dual role in the initiator identity of N-formylmethionyl-tRNA by promoting its recognition by IF2 and preventing the misappropriation of this tRNA by the elongation apparatus. This chain is Methionyl-tRNA formyltransferase, found in Herminiimonas arsenicoxydans.